Consider the following 550-residue polypeptide: Acetyl-coenzyme A transporter 1 (550 aa).

Over 1–74 (MSPTISHKDN…KRSYRAELSS (74 aa)) the chain is Cytoplasmic. The residue at position 42 (serine 42) is a Phosphoserine. A helical transmembrane segment spans residues 75–95 (ILLLLFLYVLQGIPLGLAGSI). Topologically, residues 96–113 (PLILQSKNVSYTDQAFFS) are extracellular. The N-linked (GlcNAc...) asparagine glycan is linked to asparagine 103. A helical membrane pass occupies residues 114-134 (FVFWPFSLKLLWAPLVDAVYF). Residues 135 to 141 (KNFGRRK) are Cytoplasmic-facing. Residues 142–162 (SWLVPTQYILGIFMIYLSTQV) form a helical membrane-spanning segment. Over 163 to 256 (DRLLGNIDGR…FQPQPRGIVT (94 aa)) the chain is Extracellular. Residues 257 to 277 (LSDFLFFWGTVFLITTTLVAL) traverse the membrane as a helical segment. Topologically, residues 278–300 (LKKETREASVVKEETQGITDTYK) are cytoplasmic. A helical transmembrane segment spans residues 301–321 (LLFSIIKMPAVLAFCLLILTS). Residues 322–344 (KIGFSAADAVTGLKLVEEGVPKE) lie on the Extracellular side of the membrane. Residues 345–365 (HLALLAVPMVPLQIILPLLIS) form a helical membrane-spanning segment. Residues 366–375 (KYTAGPQPLN) are Cytoplasmic-facing. The helical transmembrane segment at 376–396 (IFYKAMPYRLLLGLEYALLVW) threads the bilayer. The Extracellular segment spans residues 397 to 405 (WTPKVEHQG). Residues 406–426 (GFPIYYYIIVLLSYALHQVTL) form a helical membrane-spanning segment. The Cytoplasmic segment spans residues 427 to 509 (YSMYVSIMAF…LGGSCVTALD (83 aa)). The chain crosses the membrane as a helical span at residues 510 to 530 (GYYVESIVCVLIGFGWWFFLG). Residues 531–550 (PKFKKLQDEGPSSWKCKRTN) are Extracellular-facing.

It belongs to the SLC33A transporter family. Homodimerizes. Expressed in brain at all developmental stages. Detected in hippocampus, hypothalamus, cerebellum, cortex, olfactory bulb, and the ventral and dorsal anterior olfactory nucleus.

Its subcellular location is the endoplasmic reticulum membrane. The catalysed reaction is acetyl-CoA(in) = acetyl-CoA(out). In terms of biological role, acetyl-CoA transporter that mediates active acetyl-CoA import through the endoplasmic reticulum (ER) membrane into the ER lumen where specific ER-based acetyl-CoA:lysine acetyltransferases are responsible for the acetylation of ER-based protein substrates, such as BACE1. Necessary for O-acetylation of gangliosides. The polypeptide is Acetyl-coenzyme A transporter 1 (Slc33a1) (Rattus norvegicus (Rat)).